The sequence spans 798 residues: MGRRNRRNRQRHQRSTEQRSPAEEEQRRKAREQAAWECGYPEIIKENKLFEHYYQELKIVPDGEWDKFMASLREPLPATIRITGYKSHAKEILHCLKEKYFKELQDIEVDGQKIEAPQPLSWYPEELAWHTNLSRKIIRKSPELEKFHQFLVNETESGNISRQEAVSMIPPVLLKVQPHHKILDMCAAPGSKTAQIIEMLHADMNVPFPEGFVIANDVDNKRCYLLVHQAKRLNSPCIMVVNHDASSIPRLLVENNGSREVLYYDRILCDVPCSGDGTLRKNIDVWKKWTTLNSLQLHGLQIRIATRGVEQLAEGGRMVYSTCSLNPVEDEAVIASLLDKSEGSLELADVASEIPGLKWMPGITQWKVMTKEGHWYEKWEDIPTSRHTQIRPTMFPPKDEEKLKSMNLNRCMRILPHHQNTGGFFVAVLIKKAPMPWNKRQPKLQRRPPVSACDASIAVAPELVKAVTENSAGMADEPAVDTENGETKPCTNQSDSSKTDIVCCPPPSKKMKLFGFKEDPFVFVSEDDPIFDPIQTFYALDPSFPKKNLLTRTQEGKKRQLYMVSKELRNVLLHNSEKMKVINTGIKVLCRNNDGEQYGCAYRLAQEGIYTLYPFINARIVTVSIEDIKVLLTQENPFLSKFSKETQKQANNFDMGSIVLKYEPDPQEPETLQCPIVLCGWRGKTSIRSFVPKNERLHYLRMMGVEVFKEKAEVLEKKPVEGKACDEEHIDEKMDIDGAKEESKELSGNESGDDEDPKEEDVIDRGVLEHVALKNTSAIPASVEDQAEDASVSKESVD.

Basic residues predominate over residues 1-13 (MGRRNRRNRQRHQ). The interval 1 to 30 (MGRRNRRNRQRHQRSTEQRSPAEEEQRRKA) is disordered. Basic and acidic residues predominate over residues 14 to 30 (RSTEQRSPAEEEQRRKA). S-adenosyl-L-methionine contacts are provided by residues 186–192 (CAAPGSK), Asp-217, Asp-244, and Asp-270. Catalysis depends on Cys-323, which acts as the Nucleophile. 2 disordered regions span residues 476–499 (DEPA…SSKT) and 723–798 (KACD…ESVD). The span at 723-747 (KACDEEHIDEKMDIDGAKEESKELS) shows a compositional bias: basic and acidic residues. The span at 751–762 (SGDDEDPKEEDV) shows a compositional bias: acidic residues. The segment covering 763–772 (IDRGVLEHVA) has biased composition (basic and acidic residues).

Belongs to the class I-like SAM-binding methyltransferase superfamily. RsmB/NOP family. TRM4 subfamily.

The protein resides in the nucleus. Its subcellular location is the nucleolus. The protein localises to the cytoplasm. It is found in the mitochondrion. It localises to the cytoskeleton. The protein resides in the spindle. Its subcellular location is the secreted. The protein localises to the extracellular exosome. It carries out the reaction cytidine(48) in tRNA + S-adenosyl-L-methionine = 5-methylcytidine(48) in tRNA + S-adenosyl-L-homocysteine + H(+). The catalysed reaction is cytidine(49) in tRNA + S-adenosyl-L-methionine = 5-methylcytidine(49) in tRNA + S-adenosyl-L-homocysteine + H(+). It catalyses the reaction cytidine(50) in tRNA + S-adenosyl-L-methionine = 5-methylcytidine(50) in tRNA + S-adenosyl-L-homocysteine + H(+). The enzyme catalyses cytidine(34) in tRNA precursor + S-adenosyl-L-methionine = 5-methylcytidine(34) in tRNA precursor + S-adenosyl-L-homocysteine + H(+). It carries out the reaction a cytidine in mRNA + S-adenosyl-L-methionine = a 5-methylcytidine in mRNA + S-adenosyl-L-homocysteine + H(+). Its function is as follows. RNA cytosine C(5)-methyltransferase that methylates cytosine to 5-methylcytosine (m5C) in various RNAs, such as tRNAs, mRNAs and some long non-coding RNAs (lncRNAs). Involved in various processes, such as epidermal stem cell differentiation, testis differentiation and maternal to zygotic transition during early development: acts by increasing protein synthesis; cytosine C(5)-methylation promoting tRNA stability and preventing mRNA decay. Methylates cytosine to 5-methylcytosine (m5C) at positions 34 and 48 of intron-containing tRNA(Leu)(CAA) precursors, and at positions 48, 49 and 50 of tRNA(Gly)(GCC) precursors. tRNA methylation is required generation of RNA fragments derived from tRNAs (tRFs). Also mediates C(5)-methylation of mitochondrial tRNAs. Catalyzes cytosine C(5)-methylation of mRNAs, leading to stabilize them and prevent mRNA decay. Cytosine C(5)-methylation of mRNAs also regulates mRNA export. Also mediates cytosine C(5)-methylation of non-coding RNAs, such as vault RNAs (vtRNAs), promoting their processing into regulatory small RNAs. Required for proper spindle assembly and chromosome segregation, independently of its methyltransferase activity. The protein is RNA cytosine-C(5)-methyltransferase NSUN2 of Xenopus tropicalis (Western clawed frog).